The sequence spans 273 residues: Structural protein ORF273 (273 aa).

It is found in the virion. This Acidianus convivator (ATV) protein is Structural protein ORF273.